A 310-amino-acid chain; its full sequence is Mitogen-activated protein kinase kinase 9 (310 aa).

The Protein kinase domain maps to 47-306 (LEKLNVLGCG…APQLLAHPFL (260 aa)). Residues 53–61 (LGCGNGGIV) and lysine 76 contribute to the ATP site. The Proton acceptor role is filled by aspartate 167. Residues serine 195 and serine 201 each carry the phosphoserine modification. Threonine 205 carries the post-translational modification Phosphothreonine.

This sequence belongs to the protein kinase superfamily. STE Ser/Thr protein kinase family. MAP kinase kinase subfamily. Post-translationally, phosphorylation at Ser-195 and Ser-201 by MAP kinase kinase kinases positively regulates kinase activity. Autophosphorylated.

The protein localises to the cytoplasm. It localises to the nucleus. The enzyme catalyses L-seryl-[protein] + ATP = O-phospho-L-seryl-[protein] + ADP + H(+). It catalyses the reaction L-threonyl-[protein] + ATP = O-phospho-L-threonyl-[protein] + ADP + H(+). The catalysed reaction is L-tyrosyl-[protein] + ATP = O-phospho-L-tyrosyl-[protein] + ADP + H(+). MKK9-MPK3/MPK6 module phosphorylates and activates EIN3, leading to the promotion of EIN3-mediated transcription in ethylene signaling. Autophosphorylates and also phosphorylates MPK3 and MPK6. Plays an important role in ethylene and camalexin biosynthesis and in salt stress response. MKK9-MPK6 module positively regulates leaf senescence. The chain is Mitogen-activated protein kinase kinase 9 (MKK9) from Arabidopsis thaliana (Mouse-ear cress).